The primary structure comprises 251 residues: MSEHVYNLVKKHHSVRKFKNKPLSEDVVKKLVEAGQSASTSSFLQAYSIIGIDDEKIKENLREVSGQPYVVENGYLFVFVIDYYRHHLVDQHAETDMENAYGSTEGLLVGAIDAALVAENIAVTAEDMGYGIVFLGSLRNDVERVREILDLPDYVFPVFGMAVGEPADDENGAAKPRLPFDHVFHHNKYHADKETQYAQMADYDQTISEYYDQRTNGNRKETWSQQIEMFLGNKARLDMLEQLQKSGLIQR.

The protein belongs to the flavin oxidoreductase frp family. It depends on FMN as a cofactor.

In terms of biological role, reduces FMN, organic nitro compounds and disulfide DTNB. Involved in maintenance of the cellular redox state and the disulfide stress response. This chain is NADPH-dependent oxidoreductase (nfrA), found in Staphylococcus aureus (strain USA300).